A 122-amino-acid chain; its full sequence is Small ribosomal subunit protein uS13c (122 aa).

The tract at residues 102 to 122 (RTRTNARTRRGAKKTVAGKKK) is disordered.

It belongs to the universal ribosomal protein uS13 family. In terms of assembly, part of the 30S ribosomal subunit.

The protein localises to the plastid. Its subcellular location is the chloroplast. In terms of biological role, located at the top of the head of the 30S subunit, it contacts several helices of the 16S rRNA. This chain is Small ribosomal subunit protein uS13c, found in Guillardia theta (Cryptophyte).